Consider the following 165-residue polypeptide: Thiol peroxidase (165 aa).

A Thioredoxin domain is found at 18 to 165 (PQVGDNLAEF…DYDAALAALN (148 aa)). Cys60 functions as the Cysteine sulfenic acid (-SOH) intermediate in the catalytic mechanism. Residues Cys60 and Cys94 are joined by a disulfide bond.

It belongs to the peroxiredoxin family. Tpx subfamily. Homodimer.

It catalyses the reaction a hydroperoxide + [thioredoxin]-dithiol = an alcohol + [thioredoxin]-disulfide + H2O. In terms of biological role, thiol-specific peroxidase that catalyzes the reduction of hydrogen peroxide and organic hydroperoxides to water and alcohols, respectively. Plays a role in cell protection against oxidative stress by detoxifying peroxides. The protein is Thiol peroxidase of Corynebacterium glutamicum (strain ATCC 13032 / DSM 20300 / JCM 1318 / BCRC 11384 / CCUG 27702 / LMG 3730 / NBRC 12168 / NCIMB 10025 / NRRL B-2784 / 534).